We begin with the raw amino-acid sequence, 289 residues long: 4-diphosphocytidyl-2-C-methyl-D-erythritol kinase (289 aa).

The active site involves lysine 10. Residue 94–104 (PVAAGLAGGSS) coordinates ATP. Aspartate 136 is a catalytic residue.

This sequence belongs to the GHMP kinase family. IspE subfamily.

The enzyme catalyses 4-CDP-2-C-methyl-D-erythritol + ATP = 4-CDP-2-C-methyl-D-erythritol 2-phosphate + ADP + H(+). It functions in the pathway isoprenoid biosynthesis; isopentenyl diphosphate biosynthesis via DXP pathway; isopentenyl diphosphate from 1-deoxy-D-xylulose 5-phosphate: step 3/6. Its function is as follows. Catalyzes the phosphorylation of the position 2 hydroxy group of 4-diphosphocytidyl-2C-methyl-D-erythritol. The protein is 4-diphosphocytidyl-2-C-methyl-D-erythritol kinase of Bacillus licheniformis (strain ATCC 14580 / DSM 13 / JCM 2505 / CCUG 7422 / NBRC 12200 / NCIMB 9375 / NCTC 10341 / NRRL NRS-1264 / Gibson 46).